Here is a 1499-residue protein sequence, read N- to C-terminus: Multidrug resistance protein CDR2 (1499 aa).

Residues 1–511 lie on the Cytoplasmic side of the membrane; that stretch reads MSTANTSLSQ…NFLRMKGDPS (511 aa). The 255-residue stretch at 148–402 folds into the ABC transporter 1 domain; it reads FTTEAINKLK…FENMGWKCPQ (255 aa). Helical transmembrane passes span 512-532, 546-566, 596-616, 621-641, 660-680, and 763-783; these read IPLI…SVFF, GALF…ILSL, LPVK…MVNL, GNFF…SHMF, VFLL…YILG, and FGIT…LTEF. Residues 784 to 1193 lie on the Cytoplasmic side of the membrane; that stretch reads NKGAMQKGEI…TIVQDWRSPG (410 aa). An ABC transporter 2 domain is found at 857–1101; sequence FFWRDLTYQV…MINYFEKYGA (245 aa). Position 893–900 (893–900) interacts with ATP; sequence GASGAGKT. 6 helical membrane-spanning segments follow: residues 1194 to 1214, 1229 to 1249, 1279 to 1299, 1315 to 1335, 1354 to 1374, and 1465 to 1485; these read YIYS…FSFF, AVFM…PYFV, IPFQ…PVGL, LMWM…QLAI, LCLM…FWIF, and FGIF…FYWL.

The protein belongs to the ABC transporter superfamily. ABCG family. PDR (TC 3.A.1.205) subfamily.

The protein resides in the membrane. Functionally, multidrug efflux transporter. Confers resistance to azole antifungal agents, to other antifungals (terbinafine, amorolfine) and to a variety of metabolic inhibitors. The chain is Multidrug resistance protein CDR2 (CDR2) from Candida albicans (strain SC5314 / ATCC MYA-2876) (Yeast).